A 392-amino-acid chain; its full sequence is Phosphopentomutase (392 aa).

Aspartate 15, aspartate 287, histidine 292, aspartate 328, histidine 329, and histidine 340 together coordinate Mn(2+).

This sequence belongs to the phosphopentomutase family. Mn(2+) is required as a cofactor.

It is found in the cytoplasm. The enzyme catalyses 2-deoxy-alpha-D-ribose 1-phosphate = 2-deoxy-D-ribose 5-phosphate. It catalyses the reaction alpha-D-ribose 1-phosphate = D-ribose 5-phosphate. The protein operates within carbohydrate degradation; 2-deoxy-D-ribose 1-phosphate degradation; D-glyceraldehyde 3-phosphate and acetaldehyde from 2-deoxy-alpha-D-ribose 1-phosphate: step 1/2. Functionally, isomerase that catalyzes the conversion of deoxy-ribose 1-phosphate (dRib-1-P) and ribose 1-phosphate (Rib-1-P) to deoxy-ribose 5-phosphate (dRib-5-P) and ribose 5-phosphate (Rib-5-P), respectively. This Syntrophotalea carbinolica (strain DSM 2380 / NBRC 103641 / GraBd1) (Pelobacter carbinolicus) protein is Phosphopentomutase.